Consider the following 561-residue polypeptide: Putative transport protein YbjL (561 aa).

The next 5 helical transmembrane spans lie at 8 to 28 (LLNGNYILLLFVVLALGLCLG), 32 to 52 (LGSIQLGNSIGVLVVSLLLGQ), 66 to 86 (FMLFIFCVGVEAGPNFFSIFF), 94 to 114 (MLALVMVGSALVIALGLGKLF), and 158 to 178 (NLSLGYALTYLIGLVSLIVGA). 2 consecutive RCK C-terminal domains span residues 200–288 (RGLD…SFRN) and 292–373 (VFDR…RIGF). The next 5 membrane-spanning stretches (helical) occupy residues 383–403 (LLAFCAFFVIGLMIGMITFQF), 406–426 (FSFGMGNAAGLLFAGIMLGFM), 451–471 (VFMAGVGLSAGSGINNGLGAI), 475–495 (MLIAGLIVSLVPVVICFLFGA), and 540–560 (AIANVLLTLAGTIIVMVWPGL).

This sequence belongs to the AAE transporter (TC 2.A.81) family. YbjL subfamily.

It is found in the cell membrane. In Escherichia coli O127:H6 (strain E2348/69 / EPEC), this protein is Putative transport protein YbjL.